Here is a 1212-residue protein sequence, read N- to C-terminus: Metabotropic glutamate receptor 5 (1212 aa).

A signal peptide spans 1 to 20; that stretch reads MVLLLILSVLLLKEDVRGSA. Topologically, residues 22-580 are extracellular; that stretch reads SSERRVVAHM…QYLRWGDPEP (559 aa). A disulfide bond links Cys57 and Cys99. Tyr64 contributes to the L-glutamate binding site. Asn88 carries N-linked (GlcNAc...) asparagine glycosylation. L-glutamate-binding positions include Ser152 and 173–175; that span reads SAT. An N-linked (GlcNAc...) asparagine glycan is attached at Asn210. Tyr223 provides a ligand contact to L-glutamate. 8 disulfide bridges follow: Cys241–Cys530, Cys276–Cys278, Cys365–Cys381, Cys419–Cys426, Cys511–Cys531, Cys515–Cys534, Cys537–Cys549, and Cys552–Cys565. Asp305 is a binding site for L-glutamate. Residues Asn378 and Asn382 are each glycosylated (N-linked (GlcNAc...) asparagine). L-glutamate is bound at residue Lys396. Residue Asn445 is glycosylated (N-linked (GlcNAc...) asparagine). Residues 581–603 traverse the membrane as a helical segment; it reads IAAVVFACLGLLATLFVTVVFII. Over 604–613 the chain is Cytoplasmic; that stretch reads YRDTPVVKSS. Residues 614-636 form a helical membrane-spanning segment; that stretch reads SRELCYIILAGICLGYLCTFCLI. Residues 637-644 lie on the Extracellular side of the membrane; it reads AKPKQIYC. Cys644 and Cys733 are oxidised to a cystine. The helical transmembrane segment at 645 to 667 threads the bilayer; the sequence is YLQRIGIGLSPAMSYSALVTKTN. Over 668-693 the chain is Cytoplasmic; it reads RIARILAGSKKKICTKKPRFMSACAQ. Residues 694-714 traverse the membrane as a helical segment; it reads LVIAFILICIQLGIIVALFIM. The Extracellular segment spans residues 715–737; the sequence is EPPDIMHDYPSIREVYLICNTTN. A glycan (N-linked (GlcNAc...) asparagine) is linked at Asn734. Residues 738–759 traverse the membrane as a helical segment; it reads LGVVTPLGYNGLLILSCTFYAF. Residues 760–772 lie on the Cytoplasmic side of the membrane; it reads KTRNVPANFNEAK. A helical membrane pass occupies residues 773–795; it reads YIAFTMYTTCIIWLAFVPIYFGS. Residues 796–798 are Extracellular-facing; the sequence is NYK. The helical transmembrane segment at 799–820 threads the bilayer; sequence IITMCFSVSLSATVALGCMFVP. Residues 821-1212 are Cytoplasmic-facing; sequence KVYIILAKPE…RDYTQSSSSL (392 aa). Ser861 bears the Phosphoserine mark. 2 positions are modified to omega-N-methylarginine: Arg869 and Arg925. 3 disordered regions span residues 937 to 971, 1010 to 1056, and 1132 to 1191; these read INKK…GGSA, FPAP…SQGS, and GAQA…ALCI. Gly residues predominate over residues 961–971; that stretch reads LGAGAGAGGSA. A phosphoserine mark is found at Ser1018 and Ser1020. Positions 1132-1153 are enriched in low complexity; the sequence is GAQAAGDAARESPAAGPEAAAA. The span at 1174 to 1185 shows a compositional bias: polar residues; it reads DSGSTTPNSPVS.

The protein belongs to the G-protein coupled receptor 3 family. In terms of assembly, the PPXXF motif binds HOMER1, HOMER2 and HOMER3. Interacts with SIAH1, RYR1, RYR2, ITPR1, SHANK1, SHANK3 and TAMALIN. Interacts with NCDN. Isoform 2 interacts with NECAB2. Interacts with CAMK2A.

Its subcellular location is the cell membrane. Its function is as follows. G-protein coupled receptor for glutamate. Ligand binding causes a conformation change that triggers signaling via guanine nucleotide-binding proteins (G proteins) and modulates the activity of down-stream effectors. Signaling activates a phosphatidylinositol-calcium second messenger system and generates a calcium-activated chloride current. Plays an important role in the regulation of synaptic plasticity and the modulation of the neural network activity. In Homo sapiens (Human), this protein is Metabotropic glutamate receptor 5 (GRM5).